The primary structure comprises 425 residues: 2-oxoglutarate and iron-dependent oxygenase JMJD4 (425 aa).

Residues 141–300 (SRAFPEQDVY…IMWCFLQDEL (160 aa)) form the JmjC domain. The Fe cation site is built by H188, D190, and H268.

Belongs to the JMJD6 family. Requires Fe(2+) as cofactor.

It is found in the cytoplasm. The catalysed reaction is L-lysyl-[protein] + 2-oxoglutarate + O2 = 4-hydroxy-L-lysyl-[protein] + succinate + CO2. Its function is as follows. Catalyzes the 2-oxoglutarate and iron-dependent C4-lysyl hydroxylation of ETF1 at 'Lys-63' thereby promoting the translational termination efficiency of ETF1. This is 2-oxoglutarate and iron-dependent oxygenase JMJD4 (JMJD4) from Gallus gallus (Chicken).